Reading from the N-terminus, the 367-residue chain is CCN family member 4 (367 aa).

Positions 1-22 are cleaved as a signal peptide; that stretch reads MRWLLPWTLAAVAVLRVGNILA. An IGFBP N-terminal domain is found at 45-118; it reads RPEFCKWPCE…RYAIGVCAQV (74 aa). Cystine bridges form between Cys49-Cys73, Cys53-Cys75, Cys55-Cys76, and Cys62-Cys79. N-linked (GlcNAc...) asparagine glycosylation is present at Asn86. 2 disulfide bridges follow: Cys87-Cys101 and Cys93-Cys115. The VWFC domain maps to 121-186; it reads VGCVLDGVRY…GQCCEQWVCD (66 aa). Asn143 carries N-linked (GlcNAc...) asparagine glycosylation. The TSP type-1 domain maps to 215–260; that stretch reads NCIAYTSPWSPCSTTCGLGISTRISNVNARCWPEQESRLCNLRPCD. Intrachain disulfides connect Cys273–Cys310, Cys290–Cys324, Cys301–Cys340, Cys304–Cys342, and Cys309–Cys346. Positions 273–347 constitute a CTCK domain; the sequence is CLAVYQPEEA…NACFCNLSCR (75 aa). Asn284 carries N-linked (GlcNAc...) asparagine glycosylation. An N-linked (GlcNAc...) asparagine glycan is attached at Asn343.

Belongs to the CCN family. In terms of tissue distribution, highly expressed in kidney and lung. Lower levels in heart, brain, spleen, liver, skeletal muscle and testis. Expressed in low metastatic melanoma cells.

It localises to the secreted. Functionally, downstream regulator in the Wnt/Frizzled-signaling pathway. Associated with cell survival. Adheres to skin and melanoma fibroblasts. In vitro binding to skin fibroblasts occurs through the proteoglycans, decorin and biglycan. Suppresses tumor growth in vivo. The chain is CCN family member 4 (Ccn4) from Mus musculus (Mouse).